A 341-amino-acid polypeptide reads, in one-letter code: L-threonine 3-dehydrogenase (341 aa).

Cys38 is a binding site for Zn(2+). Catalysis depends on charge relay system residues Thr40 and His43. Residues His63, Glu64, Cys93, Cys96, Cys99, and Cys107 each contribute to the Zn(2+) site. NAD(+) is bound by residues Ile175, Asp195, Arg200, 262–264 (LGI), and 286–287 (IY).

This sequence belongs to the zinc-containing alcohol dehydrogenase family. Homotetramer. Requires Zn(2+) as cofactor.

The protein localises to the cytoplasm. It catalyses the reaction L-threonine + NAD(+) = (2S)-2-amino-3-oxobutanoate + NADH + H(+). It participates in amino-acid degradation; L-threonine degradation via oxydo-reductase pathway; glycine from L-threonine: step 1/2. Catalyzes the NAD(+)-dependent oxidation of L-threonine to 2-amino-3-ketobutyrate. The chain is L-threonine 3-dehydrogenase from Shewanella baltica (strain OS185).